Consider the following 169-residue polypeptide: Small proline-rich protein 3 (169 aa).

Low complexity predominate over residues 1 to 24 (MSSYQQKQTFTPPPQLQQQQVKQP). The disordered stretch occupies residues 1-57 (MSSYQQKQTFTPPPQLQQQQVKQPSQPPPQEIFVPTTKEPCHSKVPQPGNTKIPEPG). At S2 the chain carries N-acetylserine. A run of 14 repeats spans residues 43–50 (SKVPQPGN), 51–58 (TKIPEPGC), 59–66 (TKVPEPGC), 67–74 (TKVPEPGC), 75–82 (TKVPEPGC), 83–90 (TKVPEPGC), 91–98 (TKVPEPGC), 99–106 (TKVPEPGY), 107–114 (TKVPEPGS), 115–122 (IKVPDQGF), 123–130 (IKFPEPGA), 131–138 (IKVPEQGY), 139–146 (TKVPVPGY), and 147–154 (TKLPEPCP). The 14 X 8 AA approximate tandem repeats stretch occupies residues 43–154 (SKVPQPGNTK…GYTKLPEPCP (112 aa)). The disordered stretch occupies residues 150–169 (PEPCPSTVTPGPAQQKTKQK). Over residues 155-169 (STVTPGPAQQKTKQK) the composition is skewed to polar residues.

The protein resides in the cytoplasm. Its function is as follows. Cross-linked envelope protein of keratinocytes. The chain is Small proline-rich protein 3 (SPRR3) from Homo sapiens (Human).